We begin with the raw amino-acid sequence, 200 residues long: dITP/XTP pyrophosphatase (200 aa).

16-21 (SNNDGK) is a binding site for substrate. Mg(2+) is bound by residues E46 and D75. D75 functions as the Proton acceptor in the catalytic mechanism. Residues S76, 154–157 (FGYD), K177, and 182–183 (HR) contribute to the substrate site.

It belongs to the HAM1 NTPase family. As to quaternary structure, homodimer. The cofactor is Mg(2+).

It catalyses the reaction XTP + H2O = XMP + diphosphate + H(+). The enzyme catalyses dITP + H2O = dIMP + diphosphate + H(+). It carries out the reaction ITP + H2O = IMP + diphosphate + H(+). In terms of biological role, pyrophosphatase that catalyzes the hydrolysis of nucleoside triphosphates to their monophosphate derivatives, with a high preference for the non-canonical purine nucleotides XTP (xanthosine triphosphate), dITP (deoxyinosine triphosphate) and ITP. Seems to function as a house-cleaning enzyme that removes non-canonical purine nucleotides from the nucleotide pool, thus preventing their incorporation into DNA/RNA and avoiding chromosomal lesions. The chain is dITP/XTP pyrophosphatase from Prochlorococcus marinus (strain SARG / CCMP1375 / SS120).